The following is a 288-amino-acid chain: Energy-coupling factor transporter ATP-binding protein EcfA2 (288 aa).

The ABC transporter domain maps to 3–246 (IKLEQLGYCY…PDALVDLGLS (244 aa)). Residue 40 to 47 (GHTGSGKS) coordinates ATP.

The protein belongs to the ABC transporter superfamily. Energy-coupling factor EcfA family. In terms of assembly, forms a stable energy-coupling factor (ECF) transporter complex composed of 2 membrane-embedded substrate-binding proteins (S component), 2 ATP-binding proteins (A component) and 2 transmembrane proteins (T component).

The protein resides in the cell membrane. In terms of biological role, ATP-binding (A) component of a common energy-coupling factor (ECF) ABC-transporter complex. Unlike classic ABC transporters this ECF transporter provides the energy necessary to transport a number of different substrates. The chain is Energy-coupling factor transporter ATP-binding protein EcfA2 from Listeria welshimeri serovar 6b (strain ATCC 35897 / DSM 20650 / CCUG 15529 / CIP 8149 / NCTC 11857 / SLCC 5334 / V8).